The primary structure comprises 138 residues: Regulator of ribonuclease activity B (138 aa).

Residues 114–138 (YFEDPNGEDGDDEDFVDEDDDGVRH) are disordered. Positions 118–138 (PNGEDGDDEDFVDEDDDGVRH) are enriched in acidic residues.

This sequence belongs to the RraB family. As to quaternary structure, interacts with the C-terminal region of Rne.

Its subcellular location is the cytoplasm. Functionally, globally modulates RNA abundance by binding to RNase E (Rne) and regulating its endonucleolytic activity. Can modulate Rne action in a substrate-dependent manner by altering the composition of the degradosome. The sequence is that of Regulator of ribonuclease activity B from Escherichia coli (strain K12).